The chain runs to 289 residues: tRNA pseudouridine synthase A (289 aa).

Asp-53 serves as the catalytic Nucleophile. Tyr-119 contacts substrate.

Belongs to the tRNA pseudouridine synthase TruA family. In terms of assembly, homodimer.

It carries out the reaction uridine(38/39/40) in tRNA = pseudouridine(38/39/40) in tRNA. Functionally, formation of pseudouridine at positions 38, 39 and 40 in the anticodon stem and loop of transfer RNAs. The chain is tRNA pseudouridine synthase A from Corynebacterium glutamicum (strain ATCC 13032 / DSM 20300 / JCM 1318 / BCRC 11384 / CCUG 27702 / LMG 3730 / NBRC 12168 / NCIMB 10025 / NRRL B-2784 / 534).